Reading from the N-terminus, the 196-residue chain is CAG pathogenicity island protein 13 (196 aa).

This Helicobacter pylori (strain ATCC 700392 / 26695) (Campylobacter pylori) protein is CAG pathogenicity island protein 13 (cagS).